The sequence spans 160 residues: Large ribosomal subunit protein uL22c (160 aa).

The protein belongs to the universal ribosomal protein uL22 family. As to quaternary structure, part of the 50S ribosomal subunit.

Its subcellular location is the plastid. The protein localises to the chloroplast. Its function is as follows. This protein binds specifically to 23S rRNA. Functionally, the globular domain of the protein is located near the polypeptide exit tunnel on the outside of the subunit, while an extended beta-hairpin is found that lines the wall of the exit tunnel in the center of the 70S ribosome. This Panax ginseng (Korean ginseng) protein is Large ribosomal subunit protein uL22c (rpl22).